The sequence spans 586 residues: Scavenger receptor cysteine-rich domain-containing group B protein (586 aa).

The segment at 1-33 (MGPSERPSIGWTPKEAEMQIGPQPDGWSRGWKP) is disordered. Residues 1–58 (MGPSERPSIGWTPKEAEMQIGPQPDGWSRGWKPGDRGAVPLPLSPALSFLLLFPLASA) form the signal peptide. SRCR domains lie at 69 to 169 (LRLV…VLCD), 200 to 300 (VRLV…VLCA), 355 to 455 (LRLV…ALCA), and 484 to 584 (LRLA…VLCQ). Disulfide bonds link Cys94/Cys158, Cys107/Cys168, Cys138/Cys148, Cys225/Cys289, Cys238/Cys299, Cys269/Cys279, Cys380/Cys444, Cys393/Cys454, Cys424/Cys434, Cys509/Cys573, Cys522/Cys583, and Cys553/Cys563.

The protein resides in the secreted. This chain is Scavenger receptor cysteine-rich domain-containing group B protein, found in Mus musculus (Mouse).